The chain runs to 156 residues: ADP-ribosylation factor-like protein 2-binding protein (156 aa).

Belongs to the ARL2BP family.

Its subcellular location is the cytoplasm. It is found in the mitochondrion intermembrane space. The protein resides in the cytoskeleton. The protein localises to the microtubule organizing center. It localises to the centrosome. Its subcellular location is the nucleus. It is found in the spindle. The protein resides in the cilium basal body. In terms of biological role, plays a role as an effector of the ADP-ribosylation factor-like protein 2, ARL2. This Xenopus laevis (African clawed frog) protein is ADP-ribosylation factor-like protein 2-binding protein (arl2bp).